A 249-amino-acid chain; its full sequence is DNA repair protein RecO (249 aa).

Belongs to the RecO family.

Involved in DNA repair and RecF pathway recombination. The polypeptide is DNA repair protein RecO (Exiguobacterium sp. (strain ATCC BAA-1283 / AT1b)).